We begin with the raw amino-acid sequence, 429 residues long: Bifunctional protein GlmU (429 aa).

Positions 1–223 (MKTSILILAA…EDEFMGINDK (223 aa)) are pyrophosphorylase. UDP-N-acetyl-alpha-D-glucosamine is bound by residues 8–11 (LAAG), K22, and 81–82 (GT). A Mg(2+)-binding site is contributed by D102. UDP-N-acetyl-alpha-D-glucosamine-binding residues include G135, E149, N164, and N221. N221 provides a ligand contact to Mg(2+). Residues 224 to 244 (FELSIAENFMQEKIKKYWMQQ) are linker. An N-acetyltransferase region spans residues 245-429 (GVIFHLPQST…KDYYYKKFQK (185 aa)). UDP-N-acetyl-alpha-D-glucosamine is bound by residues R308 and K325. H336 (proton acceptor) is an active-site residue. Positions 339 and 350 each coordinate UDP-N-acetyl-alpha-D-glucosamine. Residues 359-360 (NY), S378, A396, and R413 contribute to the acetyl-CoA site.

In the N-terminal section; belongs to the N-acetylglucosamine-1-phosphate uridyltransferase family. The protein in the C-terminal section; belongs to the transferase hexapeptide repeat family. As to quaternary structure, homotrimer. Mg(2+) serves as cofactor.

It is found in the cytoplasm. It carries out the reaction alpha-D-glucosamine 1-phosphate + acetyl-CoA = N-acetyl-alpha-D-glucosamine 1-phosphate + CoA + H(+). The catalysed reaction is N-acetyl-alpha-D-glucosamine 1-phosphate + UTP + H(+) = UDP-N-acetyl-alpha-D-glucosamine + diphosphate. The protein operates within nucleotide-sugar biosynthesis; UDP-N-acetyl-alpha-D-glucosamine biosynthesis; N-acetyl-alpha-D-glucosamine 1-phosphate from alpha-D-glucosamine 6-phosphate (route II): step 2/2. It functions in the pathway nucleotide-sugar biosynthesis; UDP-N-acetyl-alpha-D-glucosamine biosynthesis; UDP-N-acetyl-alpha-D-glucosamine from N-acetyl-alpha-D-glucosamine 1-phosphate: step 1/1. Its pathway is bacterial outer membrane biogenesis; LPS lipid A biosynthesis. Catalyzes the last two sequential reactions in the de novo biosynthetic pathway for UDP-N-acetylglucosamine (UDP-GlcNAc). The C-terminal domain catalyzes the transfer of acetyl group from acetyl coenzyme A to glucosamine-1-phosphate (GlcN-1-P) to produce N-acetylglucosamine-1-phosphate (GlcNAc-1-P), which is converted into UDP-GlcNAc by the transfer of uridine 5-monophosphate (from uridine 5-triphosphate), a reaction catalyzed by the N-terminal domain. This is Bifunctional protein GlmU from Campylobacter jejuni subsp. jejuni serotype O:6 (strain 81116 / NCTC 11828).